The sequence spans 214 residues: Thymidylate kinase (214 aa).

10–17 lines the ATP pocket; it reads GPDGAGKT.

The protein belongs to the thymidylate kinase family.

The catalysed reaction is dTMP + ATP = dTDP + ADP. Its function is as follows. Phosphorylation of dTMP to form dTDP in both de novo and salvage pathways of dTTP synthesis. In Limosilactobacillus fermentum (strain NBRC 3956 / LMG 18251) (Lactobacillus fermentum), this protein is Thymidylate kinase.